The primary structure comprises 683 residues: Elongation factor G 1 (683 aa).

In terms of domain architecture, tr-type G spans 3–278; that stretch reads DKMRNIGIMA…AVVDFLPAPN (276 aa). GTP is bound by residues 12-19, 76-80, and 130-133; these read AHIDAGKT, DTPGH, and NKMD.

Belongs to the TRAFAC class translation factor GTPase superfamily. Classic translation factor GTPase family. EF-G/EF-2 subfamily.

It is found in the cytoplasm. Functionally, catalyzes the GTP-dependent ribosomal translocation step during translation elongation. During this step, the ribosome changes from the pre-translocational (PRE) to the post-translocational (POST) state as the newly formed A-site-bound peptidyl-tRNA and P-site-bound deacylated tRNA move to the P and E sites, respectively. Catalyzes the coordinated movement of the two tRNA molecules, the mRNA and conformational changes in the ribosome. The protein is Elongation factor G 1 of Treponema denticola (strain ATCC 35405 / DSM 14222 / CIP 103919 / JCM 8153 / KCTC 15104).